A 365-amino-acid chain; its full sequence is Glycerol dehydrogenase (365 aa).

5 residues coordinate NAD(+): Asp37, Gly94, Lys95, Thr116, and Ser119. Asp121 serves as a coordination point for glycerol. Residues Ser125, Leu127, and Tyr131 each coordinate NAD(+). Mn(2+) is bound by residues Asp171, His254, and His271. His254 contacts glycerol.

This sequence belongs to the iron-containing alcohol dehydrogenase family. Homohexamer. Requires Mn(2+) as cofactor.

The enzyme catalyses glycerol + NAD(+) = dihydroxyacetone + NADH + H(+). It carries out the reaction hydroxyacetone + NADH + H(+) = (S)-propane-1,2-diol + NAD(+). The protein operates within polyol metabolism; glycerol fermentation; glycerone phosphate from glycerol (oxidative route): step 1/2. Its activity is regulated as follows. Inhibited by zinc. Its function is as follows. Catalyzes the NAD-dependent oxidation of glycerol to dihydroxyacetone (glycerone). Allows microorganisms to utilize glycerol as a source of carbon under anaerobic conditions. Exhibits a rather broad substrate specificity since it can also oxidize 1,2-propanediol and 2,3-butanediol and reduce dihydroxyacetone. Cannot use NADP(+) as an electron acceptor for the oxidation of glycerol. This is Glycerol dehydrogenase from Citrobacter freundii.